The sequence spans 112 residues: Large ribosomal subunit protein P2 (112 aa).

The segment covering 69–85 (AGGAAMPAAAAGGAPAA) has biased composition (low complexity). The disordered stretch occupies residues 69-112 (AGGAAMPAAAAGGAPAAAEDKAEAKKPEAEPEEEEDDMGFSLFD). The span at 86-97 (AEDKAEAKKPEA) shows a compositional bias: basic and acidic residues.

Belongs to the eukaryotic ribosomal protein P1/P2 family. P1 and P2 exist as dimers at the large ribosomal subunit. Phosphorylated.

Plays an important role in the elongation step of protein synthesis. The protein is Large ribosomal subunit protein P2 of Babesia bovis.